A 175-amino-acid polypeptide reads, in one-letter code: Alpha-crystallin B chain (175 aa).

Position 1 is an N-acetylmethionine (methionine 1). Serine 19 is subject to Phosphoserine. An O-linked (GlcNAc) serine glycan is attached at serine 41. A phosphoserine mark is found at serine 45 and serine 59. Residues 56–164 enclose the sHSP domain; the sequence is RAPSWIDTGL…PERTIPITRE (109 aa). Residue histidine 83 participates in Zn(2+) binding. Lysine 92 carries the post-translational modification N6-acetyllysine. Zn(2+)-binding residues include histidine 104, glutamate 106, histidine 111, and histidine 119. Residues 142-175 are disordered; it reads VLTVNGPRKQAPGPERTIPITREEKPAVTAAPKK. Lysine 166 carries the N6-acetyllysine modification. Threonine 170 is a glycosylation site (O-linked (GlcNAc) threonine).

This sequence belongs to the small heat shock protein (HSP20) family. Heteromer composed of three CRYAA and one CRYAB subunits. Aggregates with homologous proteins, including the small heat shock protein HSPB1, to form large heteromeric complexes. Inter-subunit bridging via zinc ions enhances stability, which is crucial as there is no protein turn over in the lens. Interacts with HSPBAP1 and TTN/titin. Interacts with TMEM109; in the cellular response to DNA damage. Interacts with DES; binds rapidly during early stages of DES filament assembly and a reduced binding seen in the later stages. Interacts with TMED10; the interaction mediates the translocation from the cytoplasm into the ERGIC (endoplasmic reticulum-Golgi intermediate compartment) and thereby secretion. Interacts with ATP6V1A and with MTOR, forming a ternary complex. Lens as well as other tissues.

The protein resides in the cytoplasm. It localises to the nucleus. It is found in the secreted. The protein localises to the lysosome. Functionally, may contribute to the transparency and refractive index of the lens. Has chaperone-like activity, preventing aggregation of various proteins under a wide range of stress conditions. In lens epithelial cells, stabilizes the ATP6V1A protein, preventing its degradation by the proteasome. This chain is Alpha-crystallin B chain (CRYAB), found in Oryctolagus cuniculus (Rabbit).